The chain runs to 200 residues: MPKVGMPDIRKPQLVQATMTVIDRVGLHAASIALISKEAGVSTGIINHYFGGKHGLLEETMREILRQLSNTVTTELKALPADAHQQRINAIINGNFEGYQAENKVSKTWLAFWSYSMHDAQLKRLQRVNEKRLISHLLIELKSIFQPDQAELIAHGIASLIDGIWLRGTLNPEGINADKARAIINDYLDKQLTFYSCQRD.

Residues 8-68 enclose the HTH tetR-type domain; that stretch reads DIRKPQLVQA…ETMREILRQL (61 aa). The segment at residues 31–50 is a DNA-binding region (H-T-H motif); sequence SIALISKEAGVSTGIINHYF.

The protein operates within amine and polyamine biosynthesis; betaine biosynthesis via choline pathway [regulation]. Functionally, repressor involved in the biosynthesis of the osmoprotectant glycine betaine. It represses transcription of the choline transporter BetT and the genes of BetAB involved in the synthesis of glycine betaine. This is HTH-type transcriptional regulator BetI from Vibrio atlanticus (strain LGP32) (Vibrio splendidus (strain Mel32)).